The chain runs to 127 residues: Holo-[acyl-carrier-protein] synthase (127 aa).

Mg(2+)-binding residues include aspartate 9 and glutamate 58.

It belongs to the P-Pant transferase superfamily. AcpS family. Requires Mg(2+) as cofactor.

The protein resides in the cytoplasm. It carries out the reaction apo-[ACP] + CoA = holo-[ACP] + adenosine 3',5'-bisphosphate + H(+). Its function is as follows. Transfers the 4'-phosphopantetheine moiety from coenzyme A to a Ser of acyl-carrier-protein. In Shewanella sp. (strain MR-4), this protein is Holo-[acyl-carrier-protein] synthase.